Here is a 103-residue protein sequence, read N- to C-terminus: Large ribosomal subunit protein bL21 (103 aa).

The protein belongs to the bacterial ribosomal protein bL21 family. Part of the 50S ribosomal subunit. Contacts protein L20.

In terms of biological role, this protein binds to 23S rRNA in the presence of protein L20. This Shewanella sediminis (strain HAW-EB3) protein is Large ribosomal subunit protein bL21.